The following is a 464-amino-acid chain: Putative dipeptidase CPC735_014430 (464 aa).

Residues 1–34 (MSTMSARDNEKGSARSQPSHAAASEIENVPRPSR) form a disordered region. A helical transmembrane segment spans residues 40–56 (GTMIKVFIICACAGIVS). Histidine 93, aspartate 95, and glutamate 206 together coordinate Zn(2+). Residues cysteine 145 and cysteine 235 are joined by a disulfide bond. Histidine 233 provides a ligand contact to substrate. Zn(2+) contacts are provided by histidine 277 and histidine 298. 2 residues coordinate substrate: arginine 309 and aspartate 369. A glycan (N-linked (GlcNAc...) asparagine) is linked at asparagine 382.

This sequence belongs to the metallo-dependent hydrolases superfamily. Peptidase M19 family. Zn(2+) serves as cofactor.

It localises to the membrane. It carries out the reaction an L-aminoacyl-L-amino acid + H2O = 2 an L-alpha-amino acid. Its function is as follows. Hydrolyzes a wide range of dipeptides. The chain is Putative dipeptidase CPC735_014430 from Coccidioides posadasii (strain C735) (Valley fever fungus).